Consider the following 507-residue polypeptide: Xaa-Pro aminopeptidase 3 (507 aa).

The transit peptide at 1–31 (MPWLLSAPKLVPAVANVRGLSGCMLCSQRRY) directs the protein to the mitochondrion. The interval 54 to 79 (HPHLLRPGEVTPGLSQVEYALRRHKL) is interaction with TNFRSF1B. Substrate is bound by residues Y300, D331, D342, H424, H431, E451, and E475. Mn(2+) is bound by residues D331, D342, and H424. Positions 451 and 475 each coordinate Mn(2+).

Belongs to the peptidase M24B family. Homodimer. Isoform 1 interacts with TNFRSF1B/TNFR2 (activated) and TRAF2. The cofactor is Mn(2+). In terms of tissue distribution, isoform 1 and isoform 2 are widely expressed, with isoform 1 being more abundant.

The protein resides in the mitochondrion. Its subcellular location is the cytoplasm. It catalyses the reaction Release of any N-terminal amino acid, including proline, that is linked to proline, even from a dipeptide or tripeptide.. Functionally, catalyzes the removal of a penultimate prolyl residue from the N-termini of peptides, such as Leu-Pro-Ala. Also shows low activity towards peptides with Ala or Ser at the P1 position. Its function is as follows. Promotes TNFRSF1B-mediated phosphorylation of MAPK8/JNK1 and MAPK9/JNK2, suggesting a function as an adapter protein for TNFRSF1B; the effect is independent of XPNPEP3 peptidase activity. May inhibit apoptotic cell death induced via TNF-TNFRSF1B signaling. The sequence is that of Xaa-Pro aminopeptidase 3 (XPNPEP3) from Homo sapiens (Human).